The primary structure comprises 102 residues: RNA-binding protein Hfq (102 aa).

A Sm domain is found at 9 to 68; it reads DPFLNALRRERVPVSIYLVNGIKLQGQIESFDQFVILLKNTVSQMVYKHAISTVVPSRPV. Residues 64-102 are disordered; the sequence is PSRPVSHHSNTPSGGTSNYHHGNNPSAPQQPQQESDDAE. A compositionally biased stretch (polar residues) spans 70 to 96; the sequence is HHSNTPSGGTSNYHHGNNPSAPQQPQQ.

This sequence belongs to the Hfq family. As to quaternary structure, homohexamer.

Its function is as follows. RNA chaperone that binds small regulatory RNA (sRNAs) and mRNAs to facilitate mRNA translational regulation in response to envelope stress, environmental stress and changes in metabolite concentrations. Also binds with high specificity to tRNAs. This chain is RNA-binding protein Hfq, found in Serratia proteamaculans (strain 568).